The primary structure comprises 212 residues: Uridine kinase (212 aa).

An ATP-binding site is contributed by 13 to 20 (GASASGKS).

It belongs to the uridine kinase family.

The protein localises to the cytoplasm. It carries out the reaction uridine + ATP = UMP + ADP + H(+). The enzyme catalyses cytidine + ATP = CMP + ADP + H(+). It participates in pyrimidine metabolism; CTP biosynthesis via salvage pathway; CTP from cytidine: step 1/3. Its pathway is pyrimidine metabolism; UMP biosynthesis via salvage pathway; UMP from uridine: step 1/1. This Shewanella oneidensis (strain ATCC 700550 / JCM 31522 / CIP 106686 / LMG 19005 / NCIMB 14063 / MR-1) protein is Uridine kinase.